Here is a 396-residue protein sequence, read N- to C-terminus: Ribosomal RNA large subunit methyltransferase I (396 aa).

One can recognise a PUA domain in the interval 2–81; the sequence is TVRLILAKGR…EVIDCAFFIR (80 aa).

The protein belongs to the methyltransferase superfamily. RlmI family.

The protein resides in the cytoplasm. The enzyme catalyses cytidine(1962) in 23S rRNA + S-adenosyl-L-methionine = 5-methylcytidine(1962) in 23S rRNA + S-adenosyl-L-homocysteine + H(+). Specifically methylates the cytosine at position 1962 (m5C1962) of 23S rRNA. This is Ribosomal RNA large subunit methyltransferase I from Yersinia pestis bv. Antiqua (strain Antiqua).